The primary structure comprises 742 residues: NAD(P)H-quinone oxidoreductase subunit 5, chloroplastic (742 aa).

16 helical membrane-spanning segments follow: residues 9-29, 39-59, 91-111, 125-145, 147-167, 185-205, 224-244, 258-278, 280-300, 327-347, 354-374, 396-416, 425-445, 549-569, 603-623, and 721-741; these read WIIP…LLFF, IWAF…MKLA, PLTS…LIYS, FAYM…SNLI, IYIF…FWFT, GDFG…SFEF, LFCI…SAQF, TPIS…FLVA, LLPL…IGII, LGYM…FHLI, ALLF…VGYS, TSFL…CFWS, WVYS…TAFY, LFPL…GIPF, FVIN…IAFF, and ISSY…IFTF.

It belongs to the complex I subunit 5 family. NDH is composed of at least 16 different subunits, 5 of which are encoded in the nucleus.

It localises to the plastid. The protein localises to the chloroplast thylakoid membrane. It catalyses the reaction a plastoquinone + NADH + (n+1) H(+)(in) = a plastoquinol + NAD(+) + n H(+)(out). The enzyme catalyses a plastoquinone + NADPH + (n+1) H(+)(in) = a plastoquinol + NADP(+) + n H(+)(out). Functionally, NDH shuttles electrons from NAD(P)H:plastoquinone, via FMN and iron-sulfur (Fe-S) centers, to quinones in the photosynthetic chain and possibly in a chloroplast respiratory chain. The immediate electron acceptor for the enzyme in this species is believed to be plastoquinone. Couples the redox reaction to proton translocation, and thus conserves the redox energy in a proton gradient. The polypeptide is NAD(P)H-quinone oxidoreductase subunit 5, chloroplastic (ndhF) (Spinacia oleracea (Spinach)).